A 1560-amino-acid polypeptide reads, in one-letter code: Lysine-specific demethylase 5C (1560 aa).

Positions 14–55 (CPVFEPSWAEFRDPLGYIAKIRPIAEKSGICKIRPPADWQPP) constitute a JmjN domain. The ARID domain maps to 79-169 (TRVKLNYLDQ…IVYPYEMYQS (91 aa)). Over residues 197–207 (LRQSVQPSKFN) the composition is skewed to polar residues. The segment at 197–227 (LRQSVQPSKFNSYGRRAKRLQPDPEPTEEDI) is disordered. Residues lysine 205, lysine 229, lysine 244, and lysine 274 each participate in a glycyl lysine isopeptide (Lys-Gly) (interchain with G-Cter in SUMO2) cross-link. Serine 287 carries the phosphoserine modification. Lysine 295 is covalently cross-linked (Glycyl lysine isopeptide (Lys-Gly) (interchain with G-Cter in SUMO2)). Phosphoserine is present on residues serine 301 and serine 317. The PHD-type 1 zinc-finger motif lies at 326 to 372 (VCRMCSRGDEDDKLLLCDGCDDNYHIFCLLPPLPEIPKGVWRCPKCV). Tyrosine 440 provides a ligand contact to 2-oxoglutarate. One can recognise a JmjC domain in the interval 468 to 634 (EYATSGWNLN…AGRQCIEHYR (167 aa)). 2 residues coordinate Fe cation: histidine 514 and glutamate 516. 2-oxoglutarate contacts are provided by serine 522, asparagine 524, and lysine 532. A Fe cation-binding site is contributed by histidine 602. The C5HC2 zinc-finger motif lies at 707-759 (CIKCKTTCFLSALACYDCPDGLVCLSHINDLCKCSSSRQYLRYRYTLDELPAM). A phosphoserine mark is found at serine 893 and serine 897. Lysine 1127 participates in a covalent cross-link: Glycyl lysine isopeptide (Lys-Gly) (interchain with G-Cter in SUMO2). The tract at residues 1161-1181 (ILQLRRTNSAKPSPLASSSTA) is disordered. Positions 1169–1181 (SAKPSPLASSSTA) are enriched in low complexity. A PHD-type 2 zinc finger spans residues 1187–1248 (ICVCGQVLAG…DTKFLCPLCM (62 aa)). Disordered regions lie at residues 1316 to 1371 (QAEP…GSGK) and 1444 to 1560 (ERHG…QQQL). A compositionally biased stretch (basic and acidic residues) spans 1335–1345 (PLREGSGKDMP). Serine 1359 carries the post-translational modification Phosphoserine. Residues 1448 to 1463 (SRARGRALERRRRRKV) are compositionally biased toward basic residues. Positions 1464–1481 (DRGGEGDDPAREELEPKR) are enriched in basic and acidic residues. A compositionally biased stretch (acidic residues) spans 1488 to 1503 (EAEEVQEEEELEEETG). Over residues 1516–1544 (SPSTQENQNGLEPAEGTTSGPSAPFSTLT) the composition is skewed to polar residues.

This sequence belongs to the JARID1 histone demethylase family. As to quaternary structure, part of two distinct complexes, one containing E2F6, and the other containing REST. Interacts with ZMYND8. Fe(2+) serves as cofactor. As to expression, expressed in all tissues examined. Highest levels found in brain and skeletal muscle.

It localises to the nucleus. It carries out the reaction N(6),N(6),N(6)-trimethyl-L-lysyl(4)-[histone H3] + 3 2-oxoglutarate + 3 O2 = L-lysyl(4)-[histone H3] + 3 formaldehyde + 3 succinate + 3 CO2. With respect to regulation, the inhibitor KDOAM-25 and others inhibit its demethylase activity, resulting to cell cycle arrest in myeloma cells. Histone demethylase that specifically demethylates 'Lys-4' of histone H3, thereby playing a central role in histone code. Does not demethylate histone H3 'Lys-9', H3 'Lys-27', H3 'Lys-36', H3 'Lys-79' or H4 'Lys-20'. Demethylates trimethylated and dimethylated but not monomethylated H3 'Lys-4'. Participates in transcriptional repression of neuronal genes by recruiting histone deacetylases and REST at neuron-restrictive silencer elements. Represses the CLOCK-BMAL1 heterodimer-mediated transcriptional activation of the core clock component PER2. The polypeptide is Lysine-specific demethylase 5C (Homo sapiens (Human)).